A 418-amino-acid chain; its full sequence is Odorant receptor 13a (418 aa).

The Cytoplasmic segment spans residues Met-1–Ser-38. A helical transmembrane segment spans residues Leu-39 to Ile-59. Topologically, residues Ser-60 to Leu-70 are extracellular. N-linked (GlcNAc...) asparagine glycosylation occurs at Asn-69. A helical membrane pass occupies residues Ser-71–Val-91. Topologically, residues Arg-92–Ser-140 are cytoplasmic. A helical membrane pass occupies residues Leu-141–Pro-161. The Extracellular segment spans residues Ala-162 to Ser-195. The helical transmembrane segment at Tyr-196–Ile-216 threads the bilayer. The Cytoplasmic segment spans residues Thr-217–Pro-273. Residues Ile-274–Val-294 form a helical membrane-spanning segment. Residues Thr-295–Met-299 are Extracellular-facing. The helical transmembrane segment at Phe-300–Val-320 threads the bilayer. Residues Leu-321–Ser-385 lie on the Cytoplasmic side of the membrane. A helical membrane pass occupies residues Thr-386–Leu-406. The Extracellular segment spans residues Arg-407–Asp-418.

The protein belongs to the insect chemoreceptor superfamily. Heteromeric odorant receptor channel (TC 1.A.69) family. Or1a subfamily. Interacts with Orco. Complexes exist early in the endomembrane system in olfactory sensory neurons (OSNs), coupling these complexes to the conserved ciliary trafficking pathway. Expressed in olfactory sensory neurons in the antenna.

The protein localises to the cell membrane. In terms of biological role, odorant receptor which mediates acceptance or avoidance behavior, depending on its substrates. The odorant receptor repertoire encodes a large collection of odor stimuli that vary widely in identity, intensity, and duration. May form a complex with Orco to form odorant-sensing units, providing sensitive and prolonged odorant signaling and calcium permeability. Involved in the behavioral responses to octanol, nonanol, and pentyl acetate. This Drosophila melanogaster (Fruit fly) protein is Odorant receptor 13a (Or13a).